Consider the following 248-residue polypeptide: Cutinase (248 aa).

Residues 1 to 17 form the signal peptide; it reads MRSLAILTTLLAGHAFA. Positions 18–28 are excised as a propeptide; that stretch reads YPKPAPQSVNR. A lid covering the active site of the uncomplexed enzyme region spans residues 31–70; sequence WPSINEFLSELAKVMPIGDTITAACDLISDGEDAAASLFG. Cystine bridges form between C55–C91 and C79–C153. Residue S164 is the Nucleophile of the active site. C212 and C219 are oxidised to a cystine. Residue D216 is part of the active site. H229 serves as the catalytic Proton donor/acceptor.

It belongs to the cutinase family.

It localises to the secreted. It catalyses the reaction cutin + H2O = cutin monomers.. Its activity is regulated as follows. Weakly inhibited by n-undecyl phosphonate (C11Y4). Activity unaffected by paraoxon. Functionally, catalyzes the hydrolysis of complex carboxylic polyesters found in the cell wall of plants. Degrades cutin, a macromolecule that forms the structure of the plant cuticle. This chain is Cutinase, found in Hypocrea jecorina (strain QM6a) (Trichoderma reesei).